A 1284-amino-acid chain; its full sequence is DNA topoisomerase 2, mitochondrial (1284 aa).

The transit peptide at 1-35 directs the protein to the mitochondrion; it reads MSKLLNNNNHKNLTNYLKFGKGIINNLNNKSKQVG. ATP-binding positions include asparagine 183, asparagine 212, 240-242, and 253-260; these read GSN and GRNGFGAK. The interval 445–447 is interaction with DNA; the sequence is KKK. 478 to 480 lines the ATP pocket; the sequence is QSK. In terms of domain architecture, Toprim spans 560-677; that stretch reads CTLIITEGDS…NLLKRGFLVE (118 aa). Mg(2+) is bound by residues glutamate 566, aspartate 646, and aspartate 648. In terms of domain architecture, Topo IIA-type catalytic spans 810 to 1232; sequence IPSLIDGLKP…DPKSLWTADL (423 aa). The O-(5'-phospho-DNA)-tyrosine intermediate role is filled by tyrosine 900. The interval 1245-1284 is disordered; it reads EFQKKPLKTSSSSSFDVSSSSESAKLSSTRKSKTDKIKSK. The segment covering 1254 to 1271 has biased composition (low complexity); sequence SSSSSFDVSSSSESAKLS.

This sequence belongs to the type II topoisomerase family. As to quaternary structure, homodimer. Requires Mg(2+) as cofactor. Mn(2+) is required as a cofactor. It depends on Ca(2+) as a cofactor.

The protein localises to the mitochondrion. It catalyses the reaction ATP-dependent breakage, passage and rejoining of double-stranded DNA.. Functionally, control of topological states of DNA by transient breakage and subsequent rejoining of DNA strands. Topoisomerase II makes double-strand breaks. This Dictyostelium discoideum (Social amoeba) protein is DNA topoisomerase 2, mitochondrial (top2mt).